The primary structure comprises 326 residues: Probable cell division protein WhiA (326 aa).

Residues 275 to 308 (SLEELGALADPPLTKDAIAGRIRRLLALADKRAR) constitute a DNA-binding region (H-T-H motif).

It belongs to the WhiA family.

Its function is as follows. Involved in cell division and chromosome segregation. The polypeptide is Probable cell division protein WhiA (Salinispora tropica (strain ATCC BAA-916 / DSM 44818 / JCM 13857 / NBRC 105044 / CNB-440)).